We begin with the raw amino-acid sequence, 241 residues long: Ubiquinone biosynthesis O-methyltransferase (241 aa).

Arg-46, Gly-66, Asp-87, and Met-131 together coordinate S-adenosyl-L-methionine.

It belongs to the methyltransferase superfamily. UbiG/COQ3 family.

The catalysed reaction is a 3-demethylubiquinol + S-adenosyl-L-methionine = a ubiquinol + S-adenosyl-L-homocysteine + H(+). It catalyses the reaction a 3-(all-trans-polyprenyl)benzene-1,2-diol + S-adenosyl-L-methionine = a 2-methoxy-6-(all-trans-polyprenyl)phenol + S-adenosyl-L-homocysteine + H(+). Its pathway is cofactor biosynthesis; ubiquinone biosynthesis. Its function is as follows. O-methyltransferase that catalyzes the 2 O-methylation steps in the ubiquinone biosynthetic pathway. This is Ubiquinone biosynthesis O-methyltransferase from Bordetella avium (strain 197N).